The following is a 180-amino-acid chain: Meiotic recombination protein rec15 (180 aa).

Homomer. Interacts (via C-terminus) with hop1 (via C-terminus); the interaction is direct. Interacts (via C-terminus) with rec10; the interaction is direct. Interacts with mde2; the interaction is direct.

It is found in the nucleus. The protein localises to the chromosome. Required during the early stages of meiosis for meiotic recombination. In Schizosaccharomyces pombe (strain 972 / ATCC 24843) (Fission yeast), this protein is Meiotic recombination protein rec15.